The primary structure comprises 150 residues: Arginine repressor (150 aa).

This sequence belongs to the ArgR family.

The protein localises to the cytoplasm. It participates in amino-acid biosynthesis; L-arginine biosynthesis [regulation]. Regulates arginine biosynthesis genes. This Clostridium kluyveri (strain NBRC 12016) protein is Arginine repressor.